A 268-amino-acid chain; its full sequence is CCAAT/enhancer-binding protein delta (268 aa).

3 disordered regions span residues 1–50 (MSAA…STTP), 98–132 (LELL…DAPG), and 152–223 (AAQP…QQKL). Residue Ser-2 is modified to N-acetylserine. Lys-120 is covalently cross-linked (Glycyl lysine isopeptide (Lys-Gly) (interchain with G-Cter in SUMO)). Positions 155–173 (PTPPTSPEPPRGSPGPSLA) are enriched in pro residues. Residues 177–201 (VREKGAGKRGPDRGSPEYRQRRERN) are compositionally biased toward basic and acidic residues. One can recognise a bZIP domain in the interval 191–254 (SPEYRQRRER…ASLRQFFKEL (64 aa)). The tract at residues 195-222 (RQRRERNNIAVRKSRDKAKRRNQEMQQK) is basic motif. The segment at 226–254 (LSAENEKLHQRVEQLTRDLASLRQFFKEL) is leucine-zipper.

This sequence belongs to the bZIP family. C/EBP subfamily. As to quaternary structure, binds DNA as a homodimer and as a heterodimer. Can form stable heterodimers with CEBPA, CEBPB and CEBPE. Directly interacts with SPI1/PU.1; this interaction does not affect DNA-binding properties of each partner. Interacts with PRDM16. As to expression, ubiquitously expressed.

The protein resides in the nucleus. In terms of biological role, transcription activator that recognizes two different DNA motifs: the CCAAT homology common to many promoters and the enhanced core homology common to many enhancers. Important transcription factor regulating the expression of genes involved in immune and inflammatory responses. Transcriptional activator that enhances IL6 transcription alone and as heterodimer with CEBPB. The polypeptide is CCAAT/enhancer-binding protein delta (Cebpd) (Rattus norvegicus (Rat)).